The sequence spans 297 residues: L-ribulose 3-epimerase (297 aa).

The active-site Proton donor/acceptor is the Glu147. A Mn(2+)-binding site is contributed by Glu147. Residues Glu153 and 180–183 (DTFH) contribute to the substrate site. Positions 180 and 206 each coordinate Mn(2+). Arg212 is a substrate binding site. Glu241 functions as the Proton donor/acceptor in the catalytic mechanism. Residue Glu241 coordinates Mn(2+).

The protein belongs to the hyi family. As to quaternary structure, homotetramer. It depends on Mn(2+) as a cofactor.

The catalysed reaction is L-ribulose = L-xylulose. It catalyses the reaction keto-D-tagatose = keto-D-sorbose. The enzyme catalyses D-allulose = keto-D-fructose. With respect to regulation, strongly inhibited by Co(2+) and Ni(2+), and slightly inhibited by EDTA. In terms of biological role, catalyzes the epimerization of various ketoses at the C(3) position. It is able to interconvert L-ribulose with high efficiency. The enzyme can also accept other ketopentoses such as D-psicose and D-tagatose with lower efficiency. This chain is L-ribulose 3-epimerase, found in Mesorhizobium japonicum (strain LMG 29417 / CECT 9101 / MAFF 303099) (Mesorhizobium loti (strain MAFF 303099)).